We begin with the raw amino-acid sequence, 454 residues long: tRNA modification GTPase MnmE (454 aa).

3 residues coordinate (6S)-5-formyl-5,6,7,8-tetrahydrofolate: Arg-23, Glu-80, and Lys-120. The 162-residue stretch at 216 to 377 (GMKVVIAGRP…LREHLKQSMG (162 aa)) folds into the TrmE-type G domain. A K(+)-binding site is contributed by Asn-226. GTP is bound by residues 226–231 (NAGKSS), 245–251 (TDIAGTT), and 270–273 (DTAG). Ser-230 contacts Mg(2+). Thr-245, Ile-247, and Thr-250 together coordinate K(+). Thr-251 contacts Mg(2+). Lys-454 is a binding site for (6S)-5-formyl-5,6,7,8-tetrahydrofolate.

Belongs to the TRAFAC class TrmE-Era-EngA-EngB-Septin-like GTPase superfamily. TrmE GTPase family. As to quaternary structure, homodimer. Heterotetramer of two MnmE and two MnmG subunits. K(+) serves as cofactor.

Its subcellular location is the cytoplasm. Its function is as follows. Exhibits a very high intrinsic GTPase hydrolysis rate. Involved in the addition of a carboxymethylaminomethyl (cmnm) group at the wobble position (U34) of certain tRNAs, forming tRNA-cmnm(5)s(2)U34. The protein is tRNA modification GTPase MnmE of Mannheimia succiniciproducens (strain KCTC 0769BP / MBEL55E).